The primary structure comprises 207 residues: LexA repressor (207 aa).

Positions 28–48 (VREIGEAVGLASSSTVHGHLS) form a DNA-binding region, H-T-H motif. Active-site for autocatalytic cleavage activity residues include S130 and K168.

It belongs to the peptidase S24 family. In terms of assembly, homodimer.

It carries out the reaction Hydrolysis of Ala-|-Gly bond in repressor LexA.. In terms of biological role, represses a number of genes involved in the response to DNA damage (SOS response), including recA and lexA. In the presence of single-stranded DNA, RecA interacts with LexA causing an autocatalytic cleavage which disrupts the DNA-binding part of LexA, leading to derepression of the SOS regulon and eventually DNA repair. The protein is LexA repressor of Staphylococcus carnosus (strain TM300).